A 415-amino-acid polypeptide reads, in one-letter code: Trehalose synthase (415 aa).

Belongs to the glycosyltransferase group 1 family. Glycosyltransferase 4 subfamily. In terms of assembly, homodimer. Mg(2+) serves as cofactor.

It carries out the reaction an NDP-alpha-D-glucose + D-glucose = alpha,alpha-trehalose + a ribonucleoside 5'-diphosphate + H(+). Its function is as follows. Synthesizes trehalose from ADP-, UDP- or GDP-glucose and glucose. The chain is Trehalose synthase from Pyrococcus horikoshii (strain ATCC 700860 / DSM 12428 / JCM 9974 / NBRC 100139 / OT-3).